Reading from the N-terminus, the 128-residue chain is Cytochrome c-type biogenesis protein CcmE (128 aa).

The Cytoplasmic segment spans residues 1-8 (MQKRVRNR). The helical; Signal-anchor for type II membrane protein transmembrane segment at 9–29 (LITIIICFCSACLGISIILYN) threads the bilayer. Topologically, residues 30-128 (LEKNIVFFLP…KHDENYRPPQ (99 aa)) are periplasmic. Positions 120 and 124 each coordinate heme.

This sequence belongs to the CcmE/CycJ family.

It is found in the cell inner membrane. Its function is as follows. Heme chaperone required for the biogenesis of c-type cytochromes. Transiently binds heme delivered by CcmC and transfers the heme to apo-cytochromes in a process facilitated by CcmF and CcmH. The chain is Cytochrome c-type biogenesis protein CcmE from Rickettsia conorii (strain ATCC VR-613 / Malish 7).